The following is a 250-amino-acid chain: Uracil-DNA glycosylase (250 aa).

Aspartate 78 acts as the Proton acceptor in catalysis. The segment at 228–250 is disordered; the sequence is RGQKPVDWSGEQNNASRQGEFAL.

This sequence belongs to the uracil-DNA glycosylase (UDG) superfamily. UNG family.

The protein resides in the cytoplasm. It carries out the reaction Hydrolyzes single-stranded DNA or mismatched double-stranded DNA and polynucleotides, releasing free uracil.. Its function is as follows. Excises uracil residues from the DNA which can arise as a result of misincorporation of dUMP residues by DNA polymerase or due to deamination of cytosine. The protein is Uracil-DNA glycosylase of Bordetella parapertussis (strain 12822 / ATCC BAA-587 / NCTC 13253).